A 242-amino-acid polypeptide reads, in one-letter code: MPGPWLLLALALTLNLTGVPGGRAQPEAAQQEAVTAAEHPGLDDFLRQVERLLFLRENIQRLQGDQGEHSASQIFQSDWLSKRQHPGKREEEEEEGVEEEEEEEGGAVGPHKRQHPGRREDEASWSVDVTQHKRQHPGRRSPWLAYAVPKRQHPGRRLADPKAQRSWEEEEEEEEREEDLMPEKRQHPGKRALGGPCGPQGAYGQAGLLLGLLDDLSRSQGAEEKRQHPGRRAAWVREPLEE.

The N-terminal stretch at 1–24 (MPGPWLLLALALTLNLTGVPGGRA) is a signal peptide. Disordered regions lie at residues 63–205 (QGDQ…AYGQ) and 220–242 (QGAE…PLEE). Positions 69–79 (HSASQIFQSDW) are enriched in polar residues. P86 is subject to Proline amide. Residues 91–105 (EEEEEGVEEEEEEEG) are compositionally biased toward acidic residues. Proline amide occurs at positions 116, 137, and 154. Residues 157-167 (RLADPKAQRSW) are compositionally biased toward basic and acidic residues. Residues 168–178 (EEEEEEEEREE) show a composition bias toward acidic residues. 2 positions are modified to proline amide: P188 and P229.

This sequence belongs to the TRH family. Hypothalamus. Expressed in the hair follicle epithelium (at protein level).

It localises to the secreted. In terms of biological role, as a component of the hypothalamic-pituitary-thyroid axis, it controls the secretion of thyroid-stimulating hormone (TSH) and is involved in thyroid hormone synthesis regulation. It also operates as modulator of hair growth. It promotes hair-shaft elongation, prolongs the hair cycle growth phase (anagen) and antagonizes its termination (catagen) by TGFB2. It stimulates proliferation and inhibits apoptosis of hair matrix keratinocytes. This is Pro-thyrotropin-releasing hormone (TRH) from Homo sapiens (Human).